Reading from the N-terminus, the 477-residue chain is RNA pseudouridine synthase 4, mitochondrial (477 aa).

The N-terminal 43 residues, 1–43 (MAKWRLATATLRRQLQSSSPTISTFKNPTKALSAAAHQSTRSY), are a transit peptide targeting the mitochondrion. Residues 34 to 55 (AAAHQSTRSYSTTQTDDSRGKW) form a disordered region. A compositionally biased stretch (polar residues) spans 36 to 48 (AHQSTRSYSTTQT). Positions 90–175 (TTALRWILRC…AKKESFQCSD (86 aa)) constitute an S4 RNA-binding domain. Asp-236 is a catalytic residue.

It belongs to the pseudouridine synthase RluA family.

The protein resides in the mitochondrion. The enzyme catalyses a uridine in RNA = a pseudouridine in RNA. In Arabidopsis thaliana (Mouse-ear cress), this protein is RNA pseudouridine synthase 4, mitochondrial.